A 303-amino-acid polypeptide reads, in one-letter code: Lipoyl synthase (303 aa).

[4Fe-4S] cluster contacts are provided by C40, C45, C51, C67, C71, C74, and S280. The Radical SAM core domain occupies 53–269 (AVRKTATFMI…KEIALSKGFS (217 aa)).

The protein belongs to the radical SAM superfamily. Lipoyl synthase family. [4Fe-4S] cluster is required as a cofactor.

The protein resides in the cytoplasm. It carries out the reaction [[Fe-S] cluster scaffold protein carrying a second [4Fe-4S](2+) cluster] + N(6)-octanoyl-L-lysyl-[protein] + 2 oxidized [2Fe-2S]-[ferredoxin] + 2 S-adenosyl-L-methionine + 4 H(+) = [[Fe-S] cluster scaffold protein] + N(6)-[(R)-dihydrolipoyl]-L-lysyl-[protein] + 4 Fe(3+) + 2 hydrogen sulfide + 2 5'-deoxyadenosine + 2 L-methionine + 2 reduced [2Fe-2S]-[ferredoxin]. It participates in protein modification; protein lipoylation via endogenous pathway; protein N(6)-(lipoyl)lysine from octanoyl-[acyl-carrier-protein]. Its function is as follows. Catalyzes the radical-mediated insertion of two sulfur atoms into the C-6 and C-8 positions of the octanoyl moiety bound to the lipoyl domains of lipoate-dependent enzymes, thereby converting the octanoylated domains into lipoylated derivatives. This is Lipoyl synthase from Halalkalibacterium halodurans (strain ATCC BAA-125 / DSM 18197 / FERM 7344 / JCM 9153 / C-125) (Bacillus halodurans).